The sequence spans 151 residues: Small ribosomal subunit protein uS15 (151 aa).

Over residues 1–16 the composition is skewed to basic residues; it reads MPHRSRHKKGRSRSVR. The tract at residues 1 to 21 is disordered; that stretch reads MPHRSRHKKGRSRSVRPAHPT.

This sequence belongs to the universal ribosomal protein uS15 family. Part of the 30S ribosomal subunit.

This Pyrobaculum islandicum (strain DSM 4184 / JCM 9189 / GEO3) protein is Small ribosomal subunit protein uS15.